A 668-amino-acid polypeptide reads, in one-letter code: Putative ankyrin repeat protein FPV244 (668 aa).

12 ANK repeats span residues 40-69 (IPFT…KLIY), 144-173 (EYMK…DVNA), 177-206 (YCRT…DVNI), 210-239 (DDLS…NINK), 272-302 (YKNT…DVNA), 306-336 (KGET…DVNA), 340-370 (LYIT…NVNA), 374-403 (CDKT…DIEA), 407-437 (KIGT…NVNS), 441-471 (YLST…DVNA), 473-502 (NIRN…ELRD), and 571-602 (NMFY…EINT).

The protein is Putative ankyrin repeat protein FPV244 of Vertebrata (FPV).